The chain runs to 290 residues: Pyridoxal kinase PdxY (290 aa).

Substrate-binding positions include Ser-12 and Thr-47 to Gln-48. ATP-binding positions include Asp-114, Glu-151, Lys-184, and Arg-211–Leu-214. Asp-225 provides a ligand contact to substrate.

It belongs to the pyridoxine kinase family. PdxY subfamily. As to quaternary structure, homodimer. The cofactor is Mg(2+).

The enzyme catalyses pyridoxal + ATP = pyridoxal 5'-phosphate + ADP + H(+). It participates in cofactor metabolism; pyridoxal 5'-phosphate salvage; pyridoxal 5'-phosphate from pyridoxal: step 1/1. Pyridoxal kinase involved in the salvage pathway of pyridoxal 5'-phosphate (PLP). Catalyzes the phosphorylation of pyridoxal to PLP. This chain is Pyridoxal kinase PdxY, found in Pseudomonas putida (strain W619).